The primary structure comprises 223 residues: Small ribosomal subunit protein uS3 (223 aa).

Residues 39–107 (IRQFLRKKPS…EVWLEIAEIK (69 aa)) form the KH type-2 domain.

The protein belongs to the universal ribosomal protein uS3 family. As to quaternary structure, part of the 30S ribosomal subunit. Forms a tight complex with proteins S10 and S14.

Its function is as follows. Binds the lower part of the 30S subunit head. Binds mRNA in the 70S ribosome, positioning it for translation. The sequence is that of Small ribosomal subunit protein uS3 from Chlamydia pneumoniae (Chlamydophila pneumoniae).